Reading from the N-terminus, the 103-residue chain is MNTQSIGAKGKSKAAKGIAKRHRKQSSLSDSISKPAIRRIARRAGVRRVGGGCFKEINNAAREYIRDTLSIACIYATHAKRKTITCSDILHSLKRMGIKYIGY.

The segment at Met-1 to Ile-32 is disordered. Residues Gly-10–Gln-25 are compositionally biased toward basic residues. Residue Lys-16 is modified to N6-acetyl-N6-methyllysine; alternate. Lys-16 is subject to N6-methyllysine; alternate. The DNA-binding element occupies Lys-20 to Lys-24. Lys-94 is modified (N6-glutaryllysine).

It belongs to the histone H4 family. The nucleosome is a histone octamer containing two molecules each of H2A, H2B, H3 and H4 assembled in one H3-H4 heterotetramer and two H2A-H2B heterodimers. The octamer wraps approximately 147 bp of DNA. Glutarylation at Lys-94 (H4K91glu) destabilizes nucleosomes by promoting dissociation of the H2A-H2B dimers from nucleosomes.

The protein localises to the nucleus. It is found in the chromosome. In terms of biological role, core component of nucleosome. Nucleosomes wrap and compact DNA into chromatin, limiting DNA accessibility to the cellular machineries which require DNA as a template. Histones thereby play a central role in transcription regulation, DNA repair, DNA replication and chromosomal stability. DNA accessibility is regulated via a complex set of post-translational modifications of histones, also called histone code, and nucleosome remodeling. The protein is Histone H4 (HHF1) of Encephalitozoon cuniculi (strain GB-M1) (Microsporidian parasite).